The chain runs to 753 residues: Dynein regulatory complex protein 1 (753 aa).

Disordered stretches follow at residues 1 to 33 (MNPSGTIGVLEQNGEEHLATPILGPSVHSDNPQ) and 55 to 76 (LGEYLDGKKESEEEQSKSYKQK). Positions 100–388 (AADVREIHRR…QFKDLQKALR (289 aa)) form a coiled coil. A compositionally biased stretch (polar residues) spans 587-597 (SQTDKGSMVSK). Positions 587 to 628 (SQTDKGSMVSKSDQEPTEQEDEQEGDNASLSSRELEEQEDLS) are disordered. The span at 601–611 (EPTEQEDEQEG) shows a compositional bias: acidic residues. Residues 703–739 (VLTERAKLLMENESLEQQNAEMQSLLQQYLQAKVNTE) adopt a coiled-coil conformation.

This sequence belongs to the DRC1 family. Component of the nexin-dynein regulatory complex (N-DRC). Interacts with CCDC65/DRC2, DRC3, GAS8/DRC4 and TCTE1/DRC5.

Its subcellular location is the cytoplasm. The protein localises to the cytoskeleton. It localises to the cilium axoneme. The protein resides in the flagellum axoneme. In terms of biological role, component of the nexin-dynein regulatory complex (N-DRC) a key regulator of ciliary/flagellar motility which maintains the alignment and integrity of the distal axoneme and regulates microtubule sliding in motile axonemes. Plays a critical role in the assembly of N-DRC and also stabilizes the assembly of multiple inner dynein arms and radial spokes. Coassembles with CCDC65/DRC2 to form a central scaffold needed for assembly of the N-DRC and its attachment to the outer doublet microtubules. This chain is Dynein regulatory complex protein 1 (Drc1), found in Mus musculus (Mouse).